Here is a 437-residue protein sequence, read N- to C-terminus: Protein translocase subunit SecY (437 aa).

10 consecutive transmembrane segments (helical) span residues 19 to 39 (LFTLGIIVIYRIGTHIPIPGV), 69 to 89 (LLQITIFALGIMPYITASIIL), 122 to 142 (VALAVLQGTGLVATARSGALF), 157 to 177 (IFTTLTMVVTMTAGTAVVMWL), 189 to 209 (GMSILMFISIAATFPSALWSI), 219 to 239 (WIEFGIVIAVGLVMVALVVFV), 275 to 295 (GIIPVIFASSLLYIPALVVQF), 318 to 338 (HITVYFFLIIFFAFFYVAISF), 378 to 398 (GSLYLGLIALVPTMALAPLGA), and 400 to 420 (QNFPFGGTSILIIVGVGLETV).

Belongs to the SecY/SEC61-alpha family. In terms of assembly, component of the Sec protein translocase complex. Heterotrimer consisting of SecY, SecE and SecG subunits. The heterotrimers can form oligomers, although 1 heterotrimer is thought to be able to translocate proteins. Interacts with the ribosome. Interacts with SecDF, and other proteins may be involved. Interacts with SecA.

It localises to the cell membrane. In terms of biological role, the central subunit of the protein translocation channel SecYEG. Consists of two halves formed by TMs 1-5 and 6-10. These two domains form a lateral gate at the front which open onto the bilayer between TMs 2 and 7, and are clamped together by SecE at the back. The channel is closed by both a pore ring composed of hydrophobic SecY resides and a short helix (helix 2A) on the extracellular side of the membrane which forms a plug. The plug probably moves laterally to allow the channel to open. The ring and the pore may move independently. The polypeptide is Protein translocase subunit SecY (Streptomyces scabiei).